Reading from the N-terminus, the 361-residue chain is MSLPIAVYSLSVKGKDVPAVEESTDASIHLTMASIDAGEKSNKPTTLLVKVRPRIPVEDEDDEELDEQMQELLEESQREFVLCTLKPGSLYQQPLNLTITPGDEVFFSASGDATIHLSGNFLVDEEDEEEEESDEDYDLSPTEEDLVETVSGDEESEEESESEDNSASEEDELDSAPAKKAQVKKKRTKDESEQEEAASPKKNNTKKQKVEGTPVKEKKVAFAEKLEQGPTGPAAKKEKQQASSNAPSSPKTRTLKGGVVVTDVKTGSGASATNGKKVEMRYIGKLENGKVFDKNTKGKPFAFILGRGEVIRGWDVGVAGMQEGGERKITIPAPMAYGNQSIPGIPKNSTLVFEVKLVRVH.

A disordered region spans residues 122 to 256 (LVDEEDEEEE…PSSPKTRTLK (135 aa)). The segment covering 123–174 (VDEEDEEEEESDEDYDLSPTEEDLVETVSGDEESEEESESEDNSASEEDELD) has biased composition (acidic residues). Phosphoserine is present on S192. The segment covering 208–227 (QKVEGTPVKEKKVAFAEKLE) has biased composition (basic and acidic residues). The residue at position 213 (T213) is a Phosphothreonine. The segment covering 241–252 (QASSNAPSSPKT) has biased composition (polar residues). Phosphoserine is present on S249. The region spanning 275–361 (GKKVEMRYIG…VFEVKLVRVH (87 aa)) is the PPIase FKBP-type domain.

Belongs to the FKBP-type PPIase family. FKBP3/4 subfamily.

It localises to the nucleus. It is found in the nucleolus. The enzyme catalyses [protein]-peptidylproline (omega=180) = [protein]-peptidylproline (omega=0). In terms of biological role, PPIase that acts as a histone chaperone. Histone proline isomerase that increases the rate of cis-trans isomerization at prolines on the histone H3 N-terminal tail. Proline isomerization influences H3 methylation thereby regulating gene expression. This is FK506-binding protein 39 kDa from Schizosaccharomyces pombe (strain 972 / ATCC 24843) (Fission yeast).